The sequence spans 454 residues: Protein phosphatase 1F (454 aa).

A compositionally biased stretch (polar residues) spans 1-12 (MSSGAPQKSSPM). A disordered region spans residues 1–28 (MSSGAPQKSSPMASGAEETPGFLDTLLQ). Residues 156–413 (LVSIHAIRNT…DNITVMVVFL (258 aa)) form the PPM-type phosphatase domain. Positions 198, 199, 360, and 404 each coordinate Mn(2+). Residues 419 to 454 (LLEGGNQGEGDPQAEGRRQDLPSSLPEPETQAPPRS) are disordered. Serine 454 is modified (phosphoserine).

Belongs to the PP2C family. Associates with FEM1B. It depends on Mg(2+) as a cofactor. Mn(2+) serves as cofactor.

It catalyses the reaction O-phospho-L-seryl-[protein] + H2O = L-seryl-[protein] + phosphate. The catalysed reaction is O-phospho-L-threonyl-[protein] + H2O = L-threonyl-[protein] + phosphate. Functionally, dephosphorylates and concomitantly deactivates CaM-kinase II activated upon autophosphorylation, and CaM-kinases IV and I activated upon phosphorylation by CaM-kinase kinase. Promotes apoptosis. The polypeptide is Protein phosphatase 1F (PPM1F) (Homo sapiens (Human)).